Reading from the N-terminus, the 345-residue chain is Biotin synthase (345 aa).

The Radical SAM core domain occupies 38-256 (RQVQVSTLLS…IAVARIMMPA (219 aa)). C53, C57, and C60 together coordinate [4Fe-4S] cluster. Residues C97, C128, C188, and R260 each contribute to the [2Fe-2S] cluster site.

This sequence belongs to the radical SAM superfamily. Biotin synthase family. In terms of assembly, homodimer. [4Fe-4S] cluster is required as a cofactor. [2Fe-2S] cluster serves as cofactor.

The enzyme catalyses (4R,5S)-dethiobiotin + (sulfur carrier)-SH + 2 reduced [2Fe-2S]-[ferredoxin] + 2 S-adenosyl-L-methionine = (sulfur carrier)-H + biotin + 2 5'-deoxyadenosine + 2 L-methionine + 2 oxidized [2Fe-2S]-[ferredoxin]. It participates in cofactor biosynthesis; biotin biosynthesis; biotin from 7,8-diaminononanoate: step 2/2. In terms of biological role, catalyzes the conversion of dethiobiotin (DTB) to biotin by the insertion of a sulfur atom into dethiobiotin via a radical-based mechanism. In Serratia proteamaculans (strain 568), this protein is Biotin synthase.